Reading from the N-terminus, the 1164-residue chain is Receptor-like protein kinase BRI1-like 3 (1164 aa).

The signal sequence occupies residues 1-23 (MKQQWQFLILCLLVLFLTVDSRG). The Extracellular segment spans residues 24-772 (RRLLSDDVND…RSHAHPKKQS (749 aa)). A glycan (N-linked (GlcNAc...) asparagine) is linked at Asn32. The Cys pair 1 signature appears at 65–72 (CTWRGVSC). LRR repeat units lie at residues 77–98 (RVIG…NNLT), 102–123 (NLRS…SSSG), 125–146 (SLEV…DYVF), 151–173 (NLVS…PSAS), 176–197 (RITT…TFIA), 202–224 (SLKH…SFGL), 227–248 (NLTV…VSLS), 252–274 (LLET…DYWG), 278–300 (NLRQ…LSLL), 303–325 (TLEV…FTSC), 327–347 (SLQS…STVV), 352–375 (RITN…TNCS), 376–397 (NLRV…GFCS), 403–424 (VLEK…ELGK), 427–448 (SLKT…EIWT), 451–473 (KLSD…ICVD), 476–498 (NLET…ISKC), 500–523 (NMLW…GKLE), 524–546 (KLAI…LGNC), and 548–570 (NLIW…LASQ). Residues Asn96 and Asn112 are each glycosylated (N-linked (GlcNAc...) asparagine). An N-linked (GlcNAc...) asparagine glycan is attached at Asn156. N-linked (GlcNAc...) asparagine glycosylation is found at Asn212, Asn227, and Asn257. N-linked (GlcNAc...) asparagine glycosylation is found at Asn362 and Asn373. Asn461 carries an N-linked (GlcNAc...) asparagine glycan. Asn532, Asn558, and Asn638 each carry an N-linked (GlcNAc...) asparagine glycan. 4 LRR repeats span residues 640-662 (SMIY…YGAM), 664-686 (YLQV…FGGL), 688-711 (AIGV…GGLS), and 712-734 (FLSD…GQLT). 2 N-linked (GlcNAc...) asparagine glycosylation sites follow: Asn722 and Asn743. A Cys pair 2 motif is present at residues 748–755 (CGVPLPPC). Residues 773–793 (IATGMSAGIVFSFMCIVMLIM) traverse the membrane as a helical segment. Over 794-1164 (ALYRARKVQK…LVEESRDKEP (371 aa)) the chain is Cytoplasmic. Residues Thr847 and Thr855 each carry the phosphothreonine modification. The 279-residue stretch at 858-1136 (FSADSMIGSG…QVMTMFKELV (279 aa)) folds into the Protein kinase domain. ATP-binding positions include 864–872 (IGSGGFGDV) and Lys886. At Tyr931 the chain carries Phosphotyrosine. Asp985 (proton acceptor) is an active-site residue. Ser1020 carries the post-translational modification Phosphoserine. At Tyr1028 the chain carries Phosphotyrosine.

This sequence belongs to the protein kinase superfamily. Ser/Thr protein kinase family. Autophosphorylated on Tyr and Thr residues. Predominantly expressed in vascular tissues. Expressed only during postembryonic development with a very discrete pattern of expression, preferentially in the two protophloem cell files at the elongation zone of the root. The expression in these two cell files attenuates as the phloem cells differentiate in the upper root. In cotyledons and leaves, it is expressed in phloem cells, starting at the cotyledons and shoot apex, moving toward the basal part of the leaves, where the expression is weak. Expressed in the secondary and tertiary veins and in the upper part of the cotyledons and leaves. Weakly or not expressed in the inflorescence stems. Has some complementary expression with BRL1.

The protein localises to the cell membrane. The catalysed reaction is L-seryl-[protein] + ATP = O-phospho-L-seryl-[protein] + ADP + H(+). It catalyses the reaction L-threonyl-[protein] + ATP = O-phospho-L-threonyl-[protein] + ADP + H(+). It carries out the reaction L-tyrosyl-[protein] + ATP = O-phospho-L-tyrosyl-[protein] + ADP + H(+). Receptor with a dual specificity kinase activity acting on both serine/threonine- and tyrosine-containing substrates. Binds brassinolide. Regulates, in response to brassinosteroid binding, a signaling cascade involved in plant development. May be involved in cell growth and vascular differentiation. This chain is Receptor-like protein kinase BRI1-like 3 (BRL3), found in Arabidopsis thaliana (Mouse-ear cress).